The sequence spans 828 residues: Periplasmic nitrate reductase (828 aa).

Positions Met-1–Ala-31 form a signal peptide, tat-type signal. Positions Ile-39 to Asp-95 constitute a 4Fe-4S Mo/W bis-MGD-type domain. [4Fe-4S] cluster contacts are provided by Cys-46, Cys-49, Cys-53, and Cys-81. Mo-bis(molybdopterin guanine dinucleotide) contacts are provided by residues Lys-83, Gln-150, Asn-175, Cys-179, Trp-212–Met-219, Ser-243–His-247, Gln-262–Asp-264, Met-372, Gln-376, Asn-482, Ser-508–Asp-509, Lys-531, Asp-558, and Thr-718–Thr-727. Phe-794 contacts substrate. Residues Asn-802 and Lys-819 each contribute to the Mo-bis(molybdopterin guanine dinucleotide) site.

Belongs to the prokaryotic molybdopterin-containing oxidoreductase family. NasA/NapA/NarB subfamily. Component of the periplasmic nitrate reductase NapAB complex composed of NapA and NapB. The cofactor is [4Fe-4S] cluster. Mo-bis(molybdopterin guanine dinucleotide) serves as cofactor. Post-translationally, predicted to be exported by the Tat system. The position of the signal peptide cleavage has not been experimentally proven.

It localises to the periplasm. It carries out the reaction 2 Fe(II)-[cytochrome] + nitrate + 2 H(+) = 2 Fe(III)-[cytochrome] + nitrite + H2O. Its function is as follows. Catalytic subunit of the periplasmic nitrate reductase complex NapAB. Receives electrons from NapB and catalyzes the reduction of nitrate to nitrite. The sequence is that of Periplasmic nitrate reductase from Salmonella schwarzengrund (strain CVM19633).